The chain runs to 368 residues: Histidinol dehydrogenase (368 aa).

Residues threonine 197, glutamine 218, and histidine 221 each coordinate substrate. Residues glutamine 218 and histidine 221 each coordinate Zn(2+). Catalysis depends on proton acceptor residues glutamate 276 and histidine 277. Positions 277, 306, 358, and 363 each coordinate substrate. Residue aspartate 306 coordinates Zn(2+). Histidine 363 serves as a coordination point for Zn(2+).

The protein belongs to the histidinol dehydrogenase family. It depends on Zn(2+) as a cofactor.

The catalysed reaction is L-histidinol + 2 NAD(+) + H2O = L-histidine + 2 NADH + 3 H(+). It participates in amino-acid biosynthesis; L-histidine biosynthesis; L-histidine from 5-phospho-alpha-D-ribose 1-diphosphate: step 9/9. Catalyzes the sequential NAD-dependent oxidations of L-histidinol to L-histidinaldehyde and then to L-histidine. This Pyrobaculum aerophilum (strain ATCC 51768 / DSM 7523 / JCM 9630 / CIP 104966 / NBRC 100827 / IM2) protein is Histidinol dehydrogenase.